Reading from the N-terminus, the 373-residue chain is Glutamate 5-kinase (373 aa).

Lys-15 serves as a coordination point for ATP. Ser-55, Asp-142, and Asn-154 together coordinate substrate. 174–175 (TD) is an ATP binding site. In terms of domain architecture, PUA spans 281-359 (RGSVVLDDGA…SQIEAVLGYV (79 aa)).

This sequence belongs to the glutamate 5-kinase family.

The protein localises to the cytoplasm. It catalyses the reaction L-glutamate + ATP = L-glutamyl 5-phosphate + ADP. Its pathway is amino-acid biosynthesis; L-proline biosynthesis; L-glutamate 5-semialdehyde from L-glutamate: step 1/2. Functionally, catalyzes the transfer of a phosphate group to glutamate to form L-glutamate 5-phosphate. This Nitrosomonas eutropha (strain DSM 101675 / C91 / Nm57) protein is Glutamate 5-kinase.